A 138-amino-acid chain; its full sequence is Putative pre-16S rRNA nuclease (138 aa).

It belongs to the YqgF nuclease family.

It localises to the cytoplasm. Could be a nuclease involved in processing of the 5'-end of pre-16S rRNA. The chain is Putative pre-16S rRNA nuclease from Caldicellulosiruptor saccharolyticus (strain ATCC 43494 / DSM 8903 / Tp8T 6331).